Here is a 217-residue protein sequence, read N- to C-terminus: Small ribosomal subunit protein uS3c (217 aa).

The KH type-2 domain occupies 39–109 (IRNFLRTKLI…RFRITITYIP (71 aa)).

This sequence belongs to the universal ribosomal protein uS3 family. In terms of assembly, part of the 30S ribosomal subunit.

The protein localises to the plastid. It is found in the chloroplast. This is Small ribosomal subunit protein uS3c (rps3) from Chlorokybus atmophyticus (Soil alga).